The following is a 469-amino-acid chain: Cytosolic beta-glucosidase (469 aa).

Residues Q17, H120, and N164 each contribute to the substrate site. E165 serves as the catalytic Proton donor. Residue Y309 coordinates substrate. E373 (nucleophile) is an active-site residue. Substrate-binding positions include W417 and 424-425; that span reads EW.

The protein belongs to the glycosyl hydrolase 1 family. Klotho subfamily. In terms of assembly, may interact with NEU2. In terms of processing, the N-terminus is blocked. Present in small intestine (at protein level). Expressed in liver, small intestine, colon, spleen and kidney. Down-regulated in renal cell carcinomas and hepatocellular carcinomas.

It localises to the cytoplasm. The protein localises to the cytosol. The catalysed reaction is Hydrolysis of terminal, non-reducing beta-D-glucosyl residues with release of beta-D-glucose.. It carries out the reaction a beta-D-glucosyl-(1&lt;-&gt;1')-N-acylsphing-4-enine + H2O = an N-acylsphing-4-enine + D-glucose. The enzyme catalyses a beta-D-galactosyl-(1&lt;-&gt;1')-N-acylsphing-4-enine + H2O = an N-acylsphing-4-enine + D-galactose. It catalyses the reaction beta-D-glucosyl-(1&lt;-&gt;1)-sphing-4-enine + H2O = sphing-4-enine + D-glucose. The catalysed reaction is beta-D-glucosyl-(1&lt;-&gt;1)-N-octadecanoylsphing-4-enine + H2O = N-octadecanoylsphing-4-enine + D-glucose. It carries out the reaction beta-D-galactosyl-(1&lt;-&gt;1)-sphing-4-enine + H2O = sphing-4-enine + D-galactose. The enzyme catalyses beta-D-galactosyl-(1&lt;-&gt;1')-N-octadecanoylsphing-4-enine + H2O = N-octadecanoylsphing-4-enine + D-galactose. It catalyses the reaction a beta-D-xylosyl-(1&lt;-&gt;1')-N-acylsphing-4-enine + cholesterol = cholesteryl 3-beta-D-xyloside + an N-acylsphing-4-enine. With respect to regulation, inhibited by 2,4-dinitrophenyl-2-fluoro-2-deoxy-beta-D-glucopyranoside. Inhibited by sodium taurocholate. Inhibited by alpha-1-C-nonyl-DIX/AnDIX. The glucosylceramidase activity is slightly inhibited by conduritol B epoxide/CBE while the galactosylceramidase activity is not. Functionally, neutral cytosolic beta-glycosidase with a broad substrate specificity that could play a role in the catabolism of glycosylceramides. Has a significant glucosylceramidase activity in vitro. However, that activity is relatively low and its significance in vivo is not clear. Hydrolyzes galactosylceramides/GalCers, glucosylsphingosines/GlcSphs and galactosylsphingosines/GalSphs. However, the in vivo relevance of these activities is unclear. It can also hydrolyze a broad variety of dietary glycosides including phytoestrogens, flavonols, flavones, flavanones and cyanogens in vitro and could therefore play a role in the metabolism of xenobiotics. Possesses transxylosylase activity in vitro using xylosylated ceramides/XylCers (such as beta-D-xylosyl-(1&lt;-&gt;1')-N-acylsphing-4-enine) as xylosyl donors and cholesterol as acceptor. Could also play a role in the catabolism of cytosolic sialyl free N-glycans. The sequence is that of Cytosolic beta-glucosidase from Homo sapiens (Human).